The chain runs to 583 residues: Propane 2-monooxygenase operon transcriptional activator MimR (583 aa).

The Sigma-54 factor interaction domain occupies 320-513 (LAGRSSSFRR…LRHVLTETLR (194 aa)). ATP is bound by residues 348–355 (GEKGSGRT) and 395–404 (DADFAVIVAD).

Acts as a transcriptional activator of the mimABCD operon encoding the propane 2-monooxygenase complex. In Mycolicibacterium goodii (Mycobacterium goodii), this protein is Propane 2-monooxygenase operon transcriptional activator MimR.